Reading from the N-terminus, the 436-residue chain is Serine--tRNA ligase (436 aa).

239–241 lines the L-serine pocket; the sequence is TAE. 270 to 272 contacts ATP; that stretch reads RKE. Position 293 (E293) interacts with L-serine. 357–360 is an ATP binding site; the sequence is EISS. S392 is an L-serine binding site.

The protein belongs to the class-II aminoacyl-tRNA synthetase family. Type-1 seryl-tRNA synthetase subfamily. In terms of assembly, homodimer. The tRNA molecule binds across the dimer.

The protein localises to the cytoplasm. The enzyme catalyses tRNA(Ser) + L-serine + ATP = L-seryl-tRNA(Ser) + AMP + diphosphate + H(+). It catalyses the reaction tRNA(Sec) + L-serine + ATP = L-seryl-tRNA(Sec) + AMP + diphosphate + H(+). It participates in aminoacyl-tRNA biosynthesis; selenocysteinyl-tRNA(Sec) biosynthesis; L-seryl-tRNA(Sec) from L-serine and tRNA(Sec): step 1/1. In terms of biological role, catalyzes the attachment of serine to tRNA(Ser). Is also able to aminoacylate tRNA(Sec) with serine, to form the misacylated tRNA L-seryl-tRNA(Sec), which will be further converted into selenocysteinyl-tRNA(Sec). This is Serine--tRNA ligase from Leuconostoc citreum (strain KM20).